The following is a 433-amino-acid chain: Probable imidazolonepropionase (433 aa).

Residues tyrosine 160 and histidine 193 each coordinate 4-imidazolone-5-propanoate. N-formimidoyl-L-glutamate is bound at residue tyrosine 160. Position 261 (histidine 261) interacts with Fe(3+). Residue histidine 261 participates in Zn(2+) binding. Glutamate 264 serves as a coordination point for 4-imidazolone-5-propanoate. Residue aspartate 335 participates in Fe(3+) binding. Aspartate 335 contacts Zn(2+). Asparagine 337 is an N-formimidoyl-L-glutamate binding site.

The protein belongs to the metallo-dependent hydrolases superfamily. HutI family. It depends on Zn(2+) as a cofactor. Fe(3+) is required as a cofactor.

The catalysed reaction is 4-imidazolone-5-propanoate + H2O = N-formimidoyl-L-glutamate. It functions in the pathway amino-acid degradation; L-histidine degradation into L-glutamate; N-formimidoyl-L-glutamate from L-histidine: step 3/3. The sequence is that of Probable imidazolonepropionase (amdhd1) from Danio rerio (Zebrafish).